A 553-amino-acid chain; its full sequence is Putative transport protein YidE (553 aa).

A run of 5 helical transmembrane segments spans residues 4 to 24, 28 to 48, 65 to 85, 95 to 115, and 158 to 178; these read IALTVSILALVAVVGLFIGNV, GIGLGIGGVLFGGIIVGHFVS, FGLILFVYTIGIQVGPGFFAS, LFAVLIVIIGGLVTAILHKLF, and MSYAMAYPFGICGILFTMWML. RCK C-terminal domains are found at residues 191-276 and 279-361; these read QQHE…VIGQ and DTSL…VLGN. A run of 6 helical transmembrane segments spans residues 371–391, 393–413, 439–459, 464–484, 493–513, and 533–553; these read MLPVFIGIGLGVLLGSIPVFV, GFPAALKLGLAGGPLIMALIL, IVLFLSIVGLKSGGDFVNTLV, LSWIGYGALITAVPLITVGIL, YLTMCGMLAGSMTDPPALAFA, and LVMFLRIITPQLLAVLFWSIG.

It belongs to the AAE transporter (TC 2.A.81) family. YidE subfamily.

The protein localises to the cell membrane. The sequence is that of Putative transport protein YidE from Shigella flexneri serotype 5b (strain 8401).